A 280-amino-acid chain; its full sequence is Manganese transport system membrane protein MntC (280 aa).

The next 9 helical transmembrane spans lie at 16–36, 41–61, 62–82, 92–112, 137–157, 168–188, 193–213, 221–241, and 244–264; these read ALIT…FIIL, LMGD…YMMG, MNFF…IGFV, TAIG…ISFA, TIII…EFLV, YGLN…LVTV, TVGI…AYLL, IMLA…FSYI, and LASG…AFLF.

The protein belongs to the ABC-3 integral membrane protein family.

Its subcellular location is the cell membrane. In terms of biological role, this protein is probably a component of a manganese permease, a binding protein-dependent, ATP-driven transport system. This is Manganese transport system membrane protein MntC (mntC) from Listeria innocua serovar 6a (strain ATCC BAA-680 / CLIP 11262).